The primary structure comprises 207 residues: Vexin (207 aa).

The interval 65–104 is disordered; it reads RDTGDRRWLQTGRLQTARPPGAHPTKTPSRPVGISEPKTS.

The protein belongs to the vexin family.

Its subcellular location is the cell membrane. It localises to the nucleus. Required for neurogenesis in the neural plate and retina. Strongly cooperates with neural bHLH factors to promote neurogenesis. This chain is Vexin, found in Mus musculus (Mouse).